We begin with the raw amino-acid sequence, 875 residues long: MLSNTLRSNFLKFYANRNHTPVASSPVFPHNDPSILFTNAGMNQFKNIFLGKEQTSYTRATTSQKCIRAGGKHNDLENVGHTSRHLTFFEMLGNFSFGDYFKQDAISFAWEVSLSIFNFDPDFIYATVHEKDDEAFALWEKYLPTDRIFRLTDKDNFWSMADTGPCGFCSELLFDRGEKFGKAASPLEDVDGERFLEYWNLVFMEFNRTSDGTLLALQKKCVDTGAGLERLVSLLAETETVFEADVLRHLISKIENLSGTTYSPTEAKGAAFRVIADHIRSLSFAIADGLLPGNTERGYVLRKILRRAVNYGKRLGFNRPFLADVVPSLVDVMGEAYPELSASVTQIQEVLTTEEEHFFKTLQRGGNLLQQVLKSSASSAKISGEDAFKLKDTYGLPIDEIALLAKDYNYAIDMDTFEKLEVEAKERSRKNTKKTKNDSDSVFQDLDPTNTSEFIGYDTLSCDTFIEGIIKYNEIASSLEEGDEGAIILRTTPFYAGKGGQIGDSGEIFCESGTFLVSHTIAPKAGLIVHLGKLSQGSLTTTMAVTAQVNQNLRKKTANNHTGCHLLHKALEMTLGEHIRQAGSYVDSQKIRLDFTHNKALSPEDLLAIETLVNEKIRENDPVTIREVLYSDVMSSSEIKQFFGDKYGDIVRVVSAGFSHELCGGTHAQATGDIGYFRITKEHAVATGIRRIEATTGEDAENIAREQDVDLNEIATVIQSPKDQILVKIRSVMEEKKDLAKQVADLENQLVQQQVKTLLTSCEKICDTSYLVYYLTEEEGQRIQHYANAIHKEIPTNFISLWITEKNGRYIVLSRVSDDLTKRGVQAHTLLAELLAPYGGRCGGKAISAQGSSAELPQIEFLNKTLRQWISTQLA.

Zn(2+) contacts are provided by histidine 561, histidine 565, cysteine 663, and histidine 667.

It belongs to the class-II aminoacyl-tRNA synthetase family. Zn(2+) serves as cofactor.

It is found in the cytoplasm. The enzyme catalyses tRNA(Ala) + L-alanine + ATP = L-alanyl-tRNA(Ala) + AMP + diphosphate. In terms of biological role, catalyzes the attachment of alanine to tRNA(Ala) in a two-step reaction: alanine is first activated by ATP to form Ala-AMP and then transferred to the acceptor end of tRNA(Ala). Also edits incorrectly charged Ser-tRNA(Ala) and Gly-tRNA(Ala) via its editing domain. The sequence is that of Alanine--tRNA ligase from Chlamydia trachomatis serovar A (strain ATCC VR-571B / DSM 19440 / HAR-13).